The primary structure comprises 219 residues: ATP-dependent Clp protease proteolytic subunit (219 aa).

Positions 1–22 (MPVGVPKVPFLNPNPDPEPDSV) are disordered. The active-site Nucleophile is S116. H141 is an active-site residue.

The protein belongs to the peptidase S14 family. As to quaternary structure, component of the chloroplastic Clp protease core complex.

It localises to the plastid. Its subcellular location is the chloroplast stroma. The catalysed reaction is Hydrolysis of proteins to small peptides in the presence of ATP and magnesium. alpha-casein is the usual test substrate. In the absence of ATP, only oligopeptides shorter than five residues are hydrolyzed (such as succinyl-Leu-Tyr-|-NHMec, and Leu-Tyr-Leu-|-Tyr-Trp, in which cleavage of the -Tyr-|-Leu- and -Tyr-|-Trp bonds also occurs).. Functionally, cleaves peptides in various proteins in a process that requires ATP hydrolysis. Has a chymotrypsin-like activity. Plays a major role in the degradation of misfolded proteins. The protein is ATP-dependent Clp protease proteolytic subunit of Pelargonium hortorum (Common geranium).